Consider the following 435-residue polypeptide: Increased rDNA silencing protein 4 (435 aa).

4 disordered regions span residues 1–20 (MKIP…LQHD), 39–71 (ASIP…QRAA), 136–204 (ASKA…NHTL), and 233–277 (GSKR…PDEI). Basic and acidic residues predominate over residues 11 to 20 (SASKDGLQHD). The segment covering 48-59 (FSRQAPSQNPSI) has biased composition (polar residues). 2 stretches are compositionally biased toward low complexity: residues 174-186 (SSQL…LLQL) and 249-265 (QRGS…SDSS). The region spanning 327–435 (ERKRYEEVWE…VPKSVWKSVQ (109 aa)) is the EH domain.

It belongs to the IRS4 family.

Its function is as follows. Positive regulator of phosphatidylinositol 4,5-bisphosphate turnover and negatively regulates signaling through the cell integrity pathway. Involved in rDNA silencing. This Coccidioides immitis (strain RS) (Valley fever fungus) protein is Increased rDNA silencing protein 4 (IRS4).